We begin with the raw amino-acid sequence, 36 residues long: Protein YnfP (36 aa).

The protein is Protein YnfP of Escherichia coli (strain K12).